A 127-amino-acid chain; its full sequence is Holo-[acyl-carrier-protein] synthase (127 aa).

Mg(2+)-binding residues include Asp-8 and Glu-56.

The protein belongs to the P-Pant transferase superfamily. AcpS family. Mg(2+) serves as cofactor.

The protein localises to the cytoplasm. It carries out the reaction apo-[ACP] + CoA = holo-[ACP] + adenosine 3',5'-bisphosphate + H(+). In terms of biological role, transfers the 4'-phosphopantetheine moiety from coenzyme A to a Ser of acyl-carrier-protein. This is Holo-[acyl-carrier-protein] synthase from Caldanaerobacter subterraneus subsp. tengcongensis (strain DSM 15242 / JCM 11007 / NBRC 100824 / MB4) (Thermoanaerobacter tengcongensis).